The chain runs to 462 residues: A-type ATP synthase subunit B (462 aa).

This sequence belongs to the ATPase alpha/beta chains family. As to quaternary structure, has multiple subunits with at least A(3), B(3), C, D, E, F, H, I and proteolipid K(x).

Its subcellular location is the cell membrane. In terms of biological role, component of the A-type ATP synthase that produces ATP from ADP in the presence of a proton gradient across the membrane. The B chain is a regulatory subunit. The chain is A-type ATP synthase subunit B from Methanococcus maripaludis (strain C6 / ATCC BAA-1332).